The chain runs to 312 residues: Zinc transporter ZitB (312 aa).

6 consecutive transmembrane segments (helical) span residues 16–36 (LLIAFAITTLFMVTEAIGGWL), 40–60 (LALLADTGHMLTDSAALFIAL), 81–101 (LTTLAAFVNAAALLLIVILIV), 117–137 (TPMLIIAIAGLLANIFCFWIL), 153–173 (LHVLSDLLGSVGAMIAAIVIL), and 177–197 (WTPIDPILSVLVSVLILRNAW).

It belongs to the cation diffusion facilitator (CDF) transporter (TC 2.A.4) family. SLC30A subfamily.

It is found in the cell inner membrane. Its function is as follows. Involved in zinc efflux across the cytoplasmic membrane, thus reducing zinc accumulation in the cytoplasm and rendering bacteria more resistant to zinc. It may contribute to zinc homeostasis at low concentrations of zinc. This is Zinc transporter ZitB from Yersinia pseudotuberculosis serotype I (strain IP32953).